Here is a 287-residue protein sequence, read N- to C-terminus: Hydroxyethylthiazole kinase (287 aa).

Met-50 contributes to the substrate binding site. ATP-binding residues include Arg-126 and Ser-185. Gly-212 is a binding site for substrate.

This sequence belongs to the Thz kinase family. It depends on Mg(2+) as a cofactor.

The catalysed reaction is 5-(2-hydroxyethyl)-4-methylthiazole + ATP = 4-methyl-5-(2-phosphooxyethyl)-thiazole + ADP + H(+). Its pathway is cofactor biosynthesis; thiamine diphosphate biosynthesis; 4-methyl-5-(2-phosphoethyl)-thiazole from 5-(2-hydroxyethyl)-4-methylthiazole: step 1/1. Its function is as follows. Catalyzes the phosphorylation of the hydroxyl group of 4-methyl-5-beta-hydroxyethylthiazole (THZ). The protein is Hydroxyethylthiazole kinase of Methanobrevibacter smithii (strain ATCC 35061 / DSM 861 / OCM 144 / PS).